The primary structure comprises 1095 residues: DNA-directed RNA polymerase subunit beta'' (1095 aa).

Residues C220, C293, C300, and C303 each contribute to the Zn(2+) site.

The protein belongs to the RNA polymerase beta' chain family. RpoC2 subfamily. In terms of assembly, in plastids the minimal PEP RNA polymerase catalytic core is composed of four subunits: alpha, beta, beta', and beta''. When a (nuclear-encoded) sigma factor is associated with the core the holoenzyme is formed, which can initiate transcription. Requires Zn(2+) as cofactor.

It localises to the plastid. The protein resides in the chloroplast. It carries out the reaction RNA(n) + a ribonucleoside 5'-triphosphate = RNA(n+1) + diphosphate. Functionally, DNA-dependent RNA polymerase catalyzes the transcription of DNA into RNA using the four ribonucleoside triphosphates as substrates. This chain is DNA-directed RNA polymerase subunit beta'', found in Zygnema circumcarinatum (Green alga).